Consider the following 292-residue polypeptide: Poly(U)-specific endoribonuclease-B (292 aa).

Residues 8-285 enclose the EndoU domain; that stretch reads VNHELSKLFN…IGTAYPALLS (278 aa). Catalysis depends on residues H162, H178, and K224.

It belongs to the ENDOU family. As to quaternary structure, monomer. Mn(2+) is required as a cofactor.

Its subcellular location is the nucleus. The enzyme catalyses uridylyl-uridylyl-ribonucleotide-RNA = a 3'-end uridylyl-2',3'-cyclophospho-uridine-RNA + a 5'-end dephospho-ribonucleoside-RNA. Functionally, poly(U)-specific endoribonuclease involved in the processing of intron-encoded box C/D snoRNAs, such as U16 and U86. Releases products that have 2',3'-cyclic phosphate termini at the 3'-end. In Xenopus laevis (African clawed frog), this protein is Poly(U)-specific endoribonuclease-B (endou-b).